Reading from the N-terminus, the 474-residue chain is Stabilizer of axonemal microtubules 1 (474 aa).

Mn stretches follow at residues 30–64 (KPCL…KGSI), 65–97 (PMEG…PSEE), 98–131 (NMDL…PYSN), 132–165 (KMEY…PASV), 166–199 (RFDN…LCNI), 200–232 (PLED…PCEI), 233–266 (PFES…GLDM), 267–299 (PFSN…PPED), 300–332 (SMDL…RKSG), 333–366 (RFEG…FPTE), 367–400 (PLDC…RGNV), and 401–434 (PVEG…TFEE). The segment at 318 to 350 (PARSCRPAPQIRKSGRFEGSSTTKDDYKQWSSM) is disordered. Residues 444–474 (KPVSQAGSQQSSHLSVDDSENPSQRKLEVSA) are disordered. The span at 448–457 (QAGSQQSSHL) shows a compositional bias: polar residues.

This sequence belongs to the FAM154 family. In terms of assembly, associates with microtubules via the Mn regions.

It is found in the cytoplasm. It localises to the cytoskeleton. The protein localises to the microtubule organizing center. Its subcellular location is the centrosome. The protein resides in the centriole. It is found in the cilium basal body. It localises to the cilium axoneme. The protein localises to the flagellum axoneme. In terms of biological role, may play a role in the regulation of cilium length. Stabilizes microtubules at low temperature. This is Stabilizer of axonemal microtubules 1 (SAXO1) from Macaca fascicularis (Crab-eating macaque).